The following is a 257-amino-acid chain: Protein MoaE (257 aa).

6–29 (VITGGGTGIGAACARLMHPAGERV) provides a ligand contact to NAD(+). Residues 75 to 96 (LMSSSAAPAGWATAPPPRPATA) are disordered. Ser132 is a substrate binding site. The active-site Proton acceptor is Tyr145.

The protein belongs to the short-chain dehydrogenases/reductases (SDR) family.

Functionally, might catalyze the conversion of monoamine compounds or their metabolites. This Klebsiella aerogenes (Enterobacter aerogenes) protein is Protein MoaE (moaE).